The sequence spans 235 residues: MLTTTILILLIVILMVSLHLYYRWYLLRSSPFNRTTAASTFFTDPSSTPGGLNPSIIKSLPIFTFSAVTALFAMECSVCLSEFKDNESGRVMPNCKHTFHVHCIDMWFHSHSSCPLCRSQIEPFAGGVKSSMDEVAISISDPVYGDTNHHEGTETTGDSVPEDSQRKPAAIEISQRNLGEIENDLSRSHSFRSPTDEPDDIFHSEFESRSGEVLLLLLLLSEFLIFCFRRSVACK.

A helical transmembrane segment spans residues 1–21 (MLTTTILILLIVILMVSLHLY). The RING-type; atypical zinc finger occupies 76 to 118 (CSVCLSEFKDNESGRVMPNCKHTFHVHCIDMWFHSHSSCPLCR). The interval 143-167 (VYGDTNHHEGTETTGDSVPEDSQRK) is disordered.

This sequence belongs to the RING-type zinc finger family. ATL subfamily.

The protein localises to the membrane. The enzyme catalyses S-ubiquitinyl-[E2 ubiquitin-conjugating enzyme]-L-cysteine + [acceptor protein]-L-lysine = [E2 ubiquitin-conjugating enzyme]-L-cysteine + N(6)-ubiquitinyl-[acceptor protein]-L-lysine.. The protein operates within protein modification; protein ubiquitination. In terms of biological role, may be involved in the early steps of the plant defense signaling pathway. This Arabidopsis thaliana (Mouse-ear cress) protein is RING-H2 finger protein ATL17 (ATL17).